Consider the following 716-residue polypeptide: Leucine-rich repeat neuronal protein 1 (716 aa).

The first 25 residues, 1–25, serve as a signal peptide directing secretion; sequence MARLSTGKAACQVVLGLLITSLTES. The LRRNT domain maps to 26–72; sequence SILTSECPQLCVCEIRPWFTPQSTYREATTVDCNDLRLTRIPGNLSS. Over 26–631 the chain is Extracellular; sequence SILTSECPQL…DISDHETSTA (606 aa). N-linked (GlcNAc...) asparagine glycosylation occurs at Asn69. LRR repeat units lie at residues 73–95, 96–117, 120–141, 144–165, 168–189, 192–213, 216–237, 240–261, and 264–285; these read DTQV…QQLF, NLTE…GLAN, QLTT…CLQD, NLQE…AFSG, NLLR…WFDS, NLEI…NFRP, NLRS…ALVG, SLES…ALQK, and NLKF…DFKN. N-linked (GlcNAc...) asparagine glycosylation is found at Asn96 and Asn117. The region spanning 371–424 is the LRRCT domain; that stretch reads NPLRCDCVIHWINSNKTNIRFMEPLSMFCAMPPEYRGQQVKEVLIQDSSEQCLP. An N-linked (GlcNAc...) asparagine glycan is attached at Asn385. Residues 424 to 515 form the Ig-like C2-type domain; sequence PMISHDTFPN…GADTRVATIK (92 aa). An intrachain disulfide couples Cys447 to Cys499. A glycan (N-linked (GlcNAc...) asparagine) is linked at Asn517. Residues 525–619 form the Fibronectin type-III domain; the sequence is QVLKIYVKQT…VNVTTKTAAF (95 aa). Residues 632–652 traverse the membrane as a helical segment; the sequence is LAAVMGSMFAVISLASIAIYI. Residues 653 to 716 lie on the Cytoplasmic side of the membrane; it reads AKRFKRKNYH…VDTSRSYYMW (64 aa). Residues 692–716 are disordered; the sequence is SDKDKDGSADTKPTQVDTSRSYYMW. Polar residues predominate over residues 702-716; that stretch reads TKPTQVDTSRSYYMW.

In terms of tissue distribution, expressed in brain.

It localises to the membrane. The polypeptide is Leucine-rich repeat neuronal protein 1 (Lrrn1) (Mus musculus (Mouse)).